The primary structure comprises 334 residues: Short-chain dehydrogenase/reductase (334 aa).

Positions 44, 68, 93, 120, and 152 each coordinate NADP(+). Catalysis depends on proton donor residues Ser-176 and Tyr-205. NADP(+) contacts are provided by Tyr-205, Lys-209, and Asn-239. The active-site Lowers pKa of active site Tyr is Lys-209.

This sequence belongs to the short-chain dehydrogenases/reductases (SDR) family.

It participates in mycotoxin biosynthesis. Its function is as follows. Short-chain dehydrogenase/reductase; part of the 2 gene clusters that mediate the biosynthesis of fusicoccins, diterpene glucosides that display phytohormone-like activity and function as potent activators of plasma membrane H(+)-ATPases in plants by modifying 14-3-3 proteins and cause the plant disease constriction canker. The first step in the pathway is performed by the fusicoccadiene synthase PaFS that possesses both prenyl transferase and terpene cyclase activity, converting isopentenyl diphosphate and dimethylallyl diphosphate into geranylgeranyl diphosphate (GGDP) and successively converting GGDP into fusicocca-2,10(14)-diene, a precursor for fusicoccin H. The second step is the oxidation at the C-8 position by the cytochrome P450 monooxygenase PaP450-2 to yield fusicocca-2,10(14)-diene-8-beta-ol. The cytochrome P450 monooxygenase PaP450-1 then catalyzes the hydroxylation at the C-16 position to produce fusicocca-2,10(14)-diene-8-beta,16-diol. The dioxygenase fc-dox then catalyzes the 16-oxydation of fusicocca-2,10(14)-diene-8-beta,16-diol to yield an aldehyde (8-beta-hydroxyfusicocca-1,10(14)-dien-16-al). The short-chain dehydrogenase/reductase fc-sdr catalyzes the reduction of the aldehyde to yield fusicocca-1,10(14)-diene-8-beta,16-diol. The next step is the hydroxylation at C-9 performed by the cytochrome P450 monooxygenase PaP450-3 that leads to fusicoccin H aglycon which is glycosylated to fusicoccin H by the O-glycosyltransferase PaGT. Hydroxylation at C-12 by the cytochrome P450 monooxygenase PaP450-4 leads then to the production of fusicoccin Q and is followed by methylation by the O-methyltransferase PaMT to yield fusicoccin P. Fusicoccin P is further converted to fusicoccin J via prenylation by the O-glucose prenyltransferase PaPT. Cytochrome P450 monooxygenase PaP450-5 then performs hydroxylation at C-19 to yield dideacetyl-fusicoccin A which is acetylated to 3'-O-deacetyl-fusicoccin A by the O-acetyltransferase PaAT-2. Finally, a another acetylation by the O-acetyltransferase PaAT-1 yields fusicoccin A. The protein is Short-chain dehydrogenase/reductase of Phomopsis amygdali (Fusicoccum amygdali).